Consider the following 299-residue polypeptide: tRNA-cytidine(32) 2-sulfurtransferase (299 aa).

The PP-loop motif motif lies at 56 to 61; that stretch reads SGGKDS. Residues Cys-131, Cys-134, and Cys-222 each coordinate [4Fe-4S] cluster.

This sequence belongs to the TtcA family. Homodimer. Mg(2+) serves as cofactor. Requires [4Fe-4S] cluster as cofactor.

The protein resides in the cytoplasm. It catalyses the reaction cytidine(32) in tRNA + S-sulfanyl-L-cysteinyl-[cysteine desulfurase] + AH2 + ATP = 2-thiocytidine(32) in tRNA + L-cysteinyl-[cysteine desulfurase] + A + AMP + diphosphate + H(+). It participates in tRNA modification. Functionally, catalyzes the ATP-dependent 2-thiolation of cytidine in position 32 of tRNA, to form 2-thiocytidine (s(2)C32). The sulfur atoms are provided by the cysteine/cysteine desulfurase (IscS) system. The chain is tRNA-cytidine(32) 2-sulfurtransferase from Xylella fastidiosa (strain 9a5c).